The sequence spans 80 residues: Cytochrome c-553 (80 aa).

Heme c is bound by residues Cys13, Cys16, His17, and Met58.

Binds 1 heme c group covalently per subunit.

It localises to the periplasm. Natural electron acceptor for a formate dehydrogenase. This is Cytochrome c-553 from Desulfomicrobium norvegicum (strain DSM 1741 / NCIMB 8310) (Desulfovibrio baculatus (strain Norway 4)).